The sequence spans 365 residues: Probable 7-methylxanthine methyltransferase 4 (365 aa).

Residue Y18 coordinates S-adenosyl-L-homocysteine. Position 25 (T25) interacts with theobromine. 6 residues coordinate S-adenosyl-L-homocysteine: C62, Q67, D99, L100, S132, and F133. Theobromine contacts are provided by Y150, H153, and W154. 4 residues coordinate Mg(2+): N170, D256, F258, and N259. F311 lines the theobromine pocket.

Belongs to the methyltransferase superfamily. Type-7 methyltransferase family. Requires Mg(2+) as cofactor.

The enzyme catalyses 7-methylxanthine + S-adenosyl-L-methionine = theobromine + S-adenosyl-L-homocysteine + H(+). It participates in alkaloid biosynthesis. Involved in the biosynthesis of theobromine. This chain is Probable 7-methylxanthine methyltransferase 4, found in Theobroma cacao (Cacao).